The following is a 388-amino-acid chain: S-adenosylmethionine synthase (388 aa).

His-14 provides a ligand contact to ATP. Residue Asp-16 coordinates Mg(2+). Glu-42 serves as a coordination point for K(+). L-methionine-binding residues include Glu-55 and Gln-98. Residues 98–108 (QSAEISSAVDQ) are flexible loop. Residues 166–168 (DGK), Asp-242, 248–249 (RK), Ala-265, and Lys-269 contribute to the ATP site. Asp-242 contributes to the L-methionine binding site. Lys-273 is an L-methionine binding site.

This sequence belongs to the AdoMet synthase family. As to quaternary structure, homotetramer; dimer of dimers. It depends on Mg(2+) as a cofactor. The cofactor is K(+).

The protein localises to the cytoplasm. The enzyme catalyses L-methionine + ATP + H2O = S-adenosyl-L-methionine + phosphate + diphosphate. Its pathway is amino-acid biosynthesis; S-adenosyl-L-methionine biosynthesis; S-adenosyl-L-methionine from L-methionine: step 1/1. Catalyzes the formation of S-adenosylmethionine (AdoMet) from methionine and ATP. The overall synthetic reaction is composed of two sequential steps, AdoMet formation and the subsequent tripolyphosphate hydrolysis which occurs prior to release of AdoMet from the enzyme. The polypeptide is S-adenosylmethionine synthase (Oenococcus oeni (strain ATCC BAA-331 / PSU-1)).